We begin with the raw amino-acid sequence, 375 residues long: Alcohol dehydrogenase 1C (375 aa).

N-acetylserine is present on serine 2. Phosphoserine is present on serine 23. 7 residues coordinate Zn(2+): cysteine 47, histidine 68, cysteine 98, cysteine 101, cysteine 104, cysteine 112, and cysteine 175. NAD(+)-binding positions include glycine 200 to glycine 205, aspartate 224, lysine 229, isoleucine 270, valine 293 to valine 295, alanine 318 to phenylalanine 320, and arginine 370.

Belongs to the zinc-containing alcohol dehydrogenase family. Dimer of identical or non-identical chains of class I alcohol dehydrogenase: ADH1A, ADH1B, and ADH1C. Zn(2+) is required as a cofactor. In terms of tissue distribution, expressed in kidney.

It is found in the cytoplasm. The catalysed reaction is a primary alcohol + NAD(+) = an aldehyde + NADH + H(+). The enzyme catalyses ethanol + NAD(+) = acetaldehyde + NADH + H(+). Functionally, alcohol dehydrogenase. Exhibits high activity for ethanol oxidation and plays a major role in ethanol catabolism. In Papio hamadryas (Hamadryas baboon), this protein is Alcohol dehydrogenase 1C (ADH1C).